A 130-amino-acid polypeptide reads, in one-letter code: Small ribosomal subunit protein uS8 (130 aa).

It belongs to the universal ribosomal protein uS8 family. Part of the 30S ribosomal subunit. Contacts proteins S5 and S12.

Its function is as follows. One of the primary rRNA binding proteins, it binds directly to 16S rRNA central domain where it helps coordinate assembly of the platform of the 30S subunit. The protein is Small ribosomal subunit protein uS8 of Nitrosococcus oceani (strain ATCC 19707 / BCRC 17464 / JCM 30415 / NCIMB 11848 / C-107).